The following is a 355-amino-acid chain: Class E basic helix-loop-helix protein 22 (355 aa).

Disordered stretches follow at residues 34–90 (AFRS…GGGG) and 128–215 (GRGS…KEQK). Composition is skewed to gly residues over residues 81–90 (GGGGASGGGG) and 185–207 (GGSGLPPGGPTSGGGSGGGGGGS). The 55-residue stretch at 216-270 (ALRLNINARERRRMHDLNDALDELRAVIPYAHSPSVRKLSKIATLLLAKNYILMQ) folds into the bHLH domain.

As to quaternary structure, interacts with PRDM8. As to expression, brain-specific, with the highest expression in the cerebellum.

The protein resides in the nucleus. Functionally, inhibits DNA binding of TCF3/E47 homodimers and TCF3 (E47)/NEUROD1 heterodimers and acts as a strong repressor of Neurod1 and Myod-responsive genes, probably by heterodimerization with class a basic helix-loop-helix factors. Despite the presence of an intact basic domain, does not bind to DNA. In the brain, may function as an area-specific transcription factor that regulates the postmitotic acquisition of area identities and elucidate the genetic hierarchy between progenitors and postmitotic neurons driving neocortical arealization. May be required for the survival of a specific population of inhibitory neurons in the superficial laminae of the spinal cord dorsal horn that may regulate pruritis. Seems to play a crucial role in the retinogenesis, in the specification of amacrine and bipolar subtypes. Forms with PRDM8 a transcriptional repressor complex controlling genes involved in neural development and neuronal differentiation. The sequence is that of Class E basic helix-loop-helix protein 22 (Bhlhe22) from Mus musculus (Mouse).